A 169-amino-acid polypeptide reads, in one-letter code: N-alpha-acetyltransferase 50 (169 aa).

Residues 5-154 (IELGDVTPHN…DAHVLQKNLK (150 aa)) enclose the N-acetyltransferase domain. Residue Y30 participates in substrate binding. Residue Y72 is part of the active site. Position 74 (M74) interacts with substrate. 76-89 (LGCLAPYRRLGIGT) is an acetyl-CoA binding site. 78–89 (CLAPYRRLGIGT) is a binding site for CoA. The active site involves H111. 116 to 125 (NESAIDFYRK) is a binding site for CoA. Residues 137–140 (YYKR) are substrate.

Belongs to the acetyltransferase family. GNAT subfamily.

It is found in the cytoplasm. The protein localises to the nucleus. It carries out the reaction N-terminal L-methionyl-L-alanyl-[protein] + acetyl-CoA = N-terminal N(alpha)-acetyl-L-methionyl-L-alanyl-[protein] + CoA + H(+). The catalysed reaction is N-terminal L-methionyl-L-seryl-[protein] + acetyl-CoA = N-terminal N(alpha)-acetyl-L-methionyl-L-seryl-[protein] + CoA + H(+). It catalyses the reaction N-terminal L-methionyl-L-valyl-[protein] + acetyl-CoA = N-terminal N(alpha)-acetyl-L-methionyl-L-valyl-[protein] + CoA + H(+). The enzyme catalyses N-terminal L-methionyl-L-threonyl-[protein] + acetyl-CoA = N-terminal N(alpha)-acetyl-L-methionyl-L-threonyl-[protein] + CoA + H(+). It carries out the reaction N-terminal L-methionyl-L-lysyl-[protein] + acetyl-CoA = N-terminal N(alpha)-acetyl-L-methionyl-L-lysyl-[protein] + CoA + H(+). The catalysed reaction is N-terminal L-methionyl-L-leucyl-[protein] + acetyl-CoA = N-terminal N(alpha)-acetyl-L-methionyl-L-leucyl-[protein] + CoA + H(+). It catalyses the reaction N-terminal L-methionyl-L-phenylalanyl-[protein] + acetyl-CoA = N-terminal N(alpha)-acetyl-L-methionyl-L-phenylalanyl-[protein] + CoA + H(+). The enzyme catalyses N-terminal L-methionyl-L-tyrosyl-[protein] + acetyl-CoA = N-terminal N(alpha)-acetyl-L-methionyl-L-tyrosyl-[protein] + CoA + H(+). Functionally, N-alpha-acetyltransferase that acetylates the N-terminus of proteins that retain their initiating methionine. Has a broad substrate specificity: able to acetylate the initiator methionine of most peptides, except for those with a proline in second position. Also displays N-epsilon-acetyltransferase activity by mediating acetylation of the side chain of specific lysines on proteins. The relevance of N-epsilon-acetyltransferase activity is however unclear. Required for sister chromatid cohesion during mitosis by promoting binding of CDCA5/sororin to cohesin. This chain is N-alpha-acetyltransferase 50 (naa50), found in Xenopus tropicalis (Western clawed frog).